Here is a 125-residue protein sequence, read N- to C-terminus: UPF0102 protein CCNA_00142 (125 aa).

This sequence belongs to the UPF0102 family.

The protein is UPF0102 protein CCNA_00142 of Caulobacter vibrioides (strain NA1000 / CB15N) (Caulobacter crescentus).